The chain runs to 478 residues: Aspartyl/glutamyl-tRNA(Asn/Gln) amidotransferase subunit B 1 (478 aa).

This sequence belongs to the GatB/GatE family. GatB subfamily. Heterotrimer of A, B and C subunits.

The enzyme catalyses L-glutamyl-tRNA(Gln) + L-glutamine + ATP + H2O = L-glutaminyl-tRNA(Gln) + L-glutamate + ADP + phosphate + H(+). The catalysed reaction is L-aspartyl-tRNA(Asn) + L-glutamine + ATP + H2O = L-asparaginyl-tRNA(Asn) + L-glutamate + ADP + phosphate + 2 H(+). In terms of biological role, allows the formation of correctly charged Asn-tRNA(Asn) or Gln-tRNA(Gln) through the transamidation of misacylated Asp-tRNA(Asn) or Glu-tRNA(Gln) in organisms which lack either or both of asparaginyl-tRNA or glutaminyl-tRNA synthetases. The reaction takes place in the presence of glutamine and ATP through an activated phospho-Asp-tRNA(Asn) or phospho-Glu-tRNA(Gln). This chain is Aspartyl/glutamyl-tRNA(Asn/Gln) amidotransferase subunit B 1, found in Syntrophus aciditrophicus (strain SB).